The chain runs to 564 residues: Proline--tRNA ligase (564 aa).

The protein belongs to the class-II aminoacyl-tRNA synthetase family. ProS type 1 subfamily. Homodimer.

Its subcellular location is the cytoplasm. The enzyme catalyses tRNA(Pro) + L-proline + ATP = L-prolyl-tRNA(Pro) + AMP + diphosphate. Its function is as follows. Catalyzes the attachment of proline to tRNA(Pro) in a two-step reaction: proline is first activated by ATP to form Pro-AMP and then transferred to the acceptor end of tRNA(Pro). As ProRS can inadvertently accommodate and process non-cognate amino acids such as alanine and cysteine, to avoid such errors it has two additional distinct editing activities against alanine. One activity is designated as 'pretransfer' editing and involves the tRNA(Pro)-independent hydrolysis of activated Ala-AMP. The other activity is designated 'posttransfer' editing and involves deacylation of mischarged Ala-tRNA(Pro). The misacylated Cys-tRNA(Pro) is not edited by ProRS. The polypeptide is Proline--tRNA ligase (Xanthomonas campestris pv. campestris (strain 8004)).